We begin with the raw amino-acid sequence, 507 residues long: UDP-N-acetylhexosamine pyrophosphorylase-like protein 1 (507 aa).

The tract at residues 56–91 (ACARPHGPPPDLAARLRPLPPERVGRASRSDPETRR) is disordered. Residues 78 to 91 (RVGRASRSDPETRR) show a composition bias toward basic and acidic residues. The short motif at 111-114 (LAGG) is the Substrate binding element. Residues 111 to 114 (LAGG), Lys-125, Gln-199, and Gly-225 each bind UTP. Asn-226 serves as a coordination point for substrate. Asp-256 serves as a coordination point for UTP. Residues 306–307 (EY) carry the Substrate binding motif. Lys-380 is a binding site for UTP. Lys-410 is a substrate binding site.

It belongs to the UDPGP type 1 family.

This is UDP-N-acetylhexosamine pyrophosphorylase-like protein 1 (UAP1L1) from Homo sapiens (Human).